The primary structure comprises 387 residues: Exodeoxyribonuclease 7 large subunit (387 aa).

It belongs to the XseA family. Heterooligomer composed of large and small subunits.

The protein localises to the cytoplasm. The catalysed reaction is Exonucleolytic cleavage in either 5'- to 3'- or 3'- to 5'-direction to yield nucleoside 5'-phosphates.. Its function is as follows. Bidirectionally degrades single-stranded DNA into large acid-insoluble oligonucleotides, which are then degraded further into small acid-soluble oligonucleotides. The polypeptide is Exodeoxyribonuclease 7 large subunit (Campylobacter lari (strain RM2100 / D67 / ATCC BAA-1060)).